We begin with the raw amino-acid sequence, 602 residues long: Potassium voltage-gated channel subfamily A member 5 (602 aa).

The interval 1-107 (MEISLVPMEN…EDQAPQDSGS (107 aa)) is disordered. Residues 1-202 (MEISLVPMEN…FYQLGDEAME (202 aa)) form a tetramerization domain region. Topologically, residues 1–238 (MEISLVPMEN…LIFEYPESSG (238 aa)) are cytoplasmic. The span at 66–78 (PLPPMPQELPQPR) shows a compositional bias: pro residues. Ser81 bears the Phosphoserine; by CK2 and PKA mark. A Glycyl lysine isopeptide (Lys-Gly) (interchain with G-Cter in SUMO) cross-link involves residue Lys212. The chain crosses the membrane as a helical span at residues 239-260 (SARAIAIVSVLVILISIITFCL). Over 261–314 (ETLPEFRDERELLRHPPVPPQPPAPAPGANGSGSGVLSSGPTVAPLLPRTLADP) the chain is Extracellular. The tract at residues 274-297 (RHPPVPPQPPAPAPGANGSGSGVL) is disordered. Positions 276–286 (PPVPPQPPAPA) are enriched in pro residues. An N-linked (GlcNAc...) asparagine glycan is attached at Asn290. A helical transmembrane segment spans residues 315-336 (FFIVETTCVIWFTFELLVRFFA). Cys337 carries the S-palmitoyl cysteine lipid modification. Residues 337 to 347 (CPSKAEFSRNI) lie on the Cytoplasmic side of the membrane. A helical membrane pass occupies residues 348–368 (MNIIDIVAIFPYFITLGTELA). The Extracellular portion of the chain corresponds to 369 to 384 (EQQPGGGGQNGQQAMS). Residues 385–405 (LAILRVIRLVRVFRIFKLSRH) form a helical; Voltage-sensor membrane-spanning segment. Residues 406–420 (SKGLQILGKTLQASM) lie on the Cytoplasmic side of the membrane. Residues 407-420 (KGLQILGKTLQASM) form an S4-S5 linker region. A helical transmembrane segment spans residues 421-442 (RELGLLIFFLFIGVILFSSAVY). Residues 443 to 456 (FAEADNQGSHFSSI) are Extracellular-facing. The helical intramembrane region spans 457-468 (PDAFWWAVVTMT). A Selectivity filter motif is present at residues 469 to 474 (TVGYGD). Residues 469–476 (TVGYGDMR) lie within the membrane without spanning it. Topologically, residues 477–483 (PITVGGK) are extracellular. A helical membrane pass occupies residues 484 to 512 (IVGSLCAIAGVLTIALPVPVIVSNFNYFY). The Cytoplasmic portion of the chain corresponds to 513-602 (HRETDHEEQA…CLDTSRETDL (90 aa)). Residue Lys525 forms a Glycyl lysine isopeptide (Lys-Gly) (interchain with G-Cter in SUMO) linkage. Ser535, Ser546, and Ser569 each carry phosphoserine; by PKA. Positions 600–602 (TDL) match the PDZ-binding motif.

Belongs to the potassium channel family. A (Shaker) (TC 1.A.1.2) subfamily. Kv1.5/KCNA5 sub-subfamily. Homotetramer and heterotetramer of potassium channel proteins. Interacts with DLG1, which enhances channel currents. Forms a ternary complex with DLG1 and CAV3. Interacts with KCNAB1. Interacts with UBE2I. Interacts with XIRP2; the interaction is required for normal action potential configuration in the heart. Glycosylated. Post-translationally, sumoylated on Lys-212, and Lys-525, preferentially with SUMO3. Sumoylation regulates the voltage sensitivity of the channel. Expressed in the heart (at protein level). Expressed in the brain and weakly expressed in the thymus, skeletal muscle and spleen.

Its subcellular location is the cell membrane. The catalysed reaction is K(+)(in) = K(+)(out). Its function is as follows. Voltage-gated potassium channel that mediates transmembrane potassium transport in excitable membranes. Forms tetrameric potassium-selective channels through which potassium ions pass in accordance with their electrochemical gradient. The channel alternates between opened and closed conformations in response to the voltage difference across the membrane. Can form functional homotetrameric channels and heterotetrameric channels that contain variable proportions of KCNA1, KCNA2, KCNA4, KCNA5, and possibly other family members as well; channel properties depend on the type of alpha subunits that are part of the channel. Channel properties are modulated by cytoplasmic beta subunits that regulate the subcellular location of the alpha subunits and promote rapid inactivation. Homotetrameric channels display rapid activation and slow inactivation. Required for normal electrical conduction including formation of the infranodal ventricular conduction system and normal action potential configuration, as a result of its interaction with XIRP2. May play a role in regulating the secretion of insulin in normal pancreatic islets. In terms of biological role, voltage-gated potassium channel that mediates transmembrane potassium transport in excitable membranes. Forms tetrameric potassium-selective channels through which potassium ions pass in accordance with their electrochemical gradient. The channel alternates between opened and closed conformations in response to the voltage difference across the membrane. Inactive. Inhibits expression of isoform 1 and isoform 2. In Mus musculus (Mouse), this protein is Potassium voltage-gated channel subfamily A member 5 (Kcna5).